A 304-amino-acid polypeptide reads, in one-letter code: Acetaldehyde dehydrogenase 4 (304 aa).

Catalysis depends on cysteine 131, which acts as the Acyl-thioester intermediate. NAD(+) is bound by residues serine 162–asparagine 170 and asparagine 273.

This sequence belongs to the acetaldehyde dehydrogenase family. As to quaternary structure, heterotetramer composed of two BphI (aldolase) and two BphJ (dehydrogenase).

The enzyme catalyses acetaldehyde + NAD(+) + CoA = acetyl-CoA + NADH + H(+). It catalyses the reaction propanal + NAD(+) + CoA = propanoyl-CoA + NADH + H(+). It functions in the pathway xenobiotic degradation; polychlorinated biphenyl degradation. Bound pyruvate or other intermediates in the aldol addition reaction catalyzed by BphI allosterically activates BphJ reductive deacylation activity. In terms of biological role, catalyzes the conversion of acetaldehyde or propanal to acetyl-CoA or propanoyl-CoA, respectively, using NAD(+) and coenzyme A. Displays broad specificity since it can utilize aliphatic aldehydes from two to five carbons in length as substrates; the aldehyde substrates can be directly channeled from the aldolase BphI to the dehydrogenase BphJ. Is the final enzyme in the meta-cleavage pathway for the degradation of polychlorinated biphenyls (PCBs). Is also able to utilize NADP(+) instead of NAD(+). Is not active with succinic semialdehyde or picolinaldehyde as substrates. Can also catalyze the reverse reaction, i.e. the reductive deacylation of acetyl-CoA to acetaldehyde, which is then channeled to the BphI active site. The BphI-BphJ enzyme complex exhibits unique bidirectionality in substrate channeling and allosteric activation. This is Acetaldehyde dehydrogenase 4 (bphJ) from Paraburkholderia xenovorans (strain LB400).